A 319-amino-acid polypeptide reads, in one-letter code: Beta-ketoacyl-[acyl-carrier-protein] synthase III (319 aa).

Residues cysteine 112 and histidine 246 contribute to the active site. The ACP-binding stretch occupies residues glutamine 247 to arginine 251. Asparagine 276 is a catalytic residue.

It belongs to the thiolase-like superfamily. FabH family. In terms of assembly, homodimer.

It is found in the cytoplasm. It catalyses the reaction malonyl-[ACP] + acetyl-CoA + H(+) = 3-oxobutanoyl-[ACP] + CO2 + CoA. It participates in lipid metabolism; fatty acid biosynthesis. Its function is as follows. Catalyzes the condensation reaction of fatty acid synthesis by the addition to an acyl acceptor of two carbons from malonyl-ACP. Catalyzes the first condensation reaction which initiates fatty acid synthesis and may therefore play a role in governing the total rate of fatty acid production. Possesses both acetoacetyl-ACP synthase and acetyl transacylase activities. Its substrate specificity determines the biosynthesis of branched-chain and/or straight-chain of fatty acids. The polypeptide is Beta-ketoacyl-[acyl-carrier-protein] synthase III (Pseudoalteromonas atlantica (strain T6c / ATCC BAA-1087)).